The sequence spans 268 residues: Ribosomal RNA small subunit methyltransferase A (268 aa).

The S-adenosyl-L-methionine site is built by Asn16, Leu18, Gly43, Glu64, Asp89, and Asn110.

It belongs to the class I-like SAM-binding methyltransferase superfamily. rRNA adenine N(6)-methyltransferase family. RsmA subfamily.

Its subcellular location is the cytoplasm. It catalyses the reaction adenosine(1518)/adenosine(1519) in 16S rRNA + 4 S-adenosyl-L-methionine = N(6)-dimethyladenosine(1518)/N(6)-dimethyladenosine(1519) in 16S rRNA + 4 S-adenosyl-L-homocysteine + 4 H(+). Specifically dimethylates two adjacent adenosines (A1518 and A1519) in the loop of a conserved hairpin near the 3'-end of 16S rRNA in the 30S particle. May play a critical role in biogenesis of 30S subunits. The polypeptide is Ribosomal RNA small subunit methyltransferase A (Pseudomonas syringae pv. tomato (strain ATCC BAA-871 / DC3000)).